The primary structure comprises 152 residues: Methylglyoxal synthase (152 aa).

The MGS-like domain maps to 6-152 (RTIPAQKHIA…YQRYLQDRLK (147 aa)). Substrate-binding positions include His-19, Lys-23, 45–48 (TGTT), and 65–66 (SG). The Proton donor/acceptor role is filled by Asp-71. His-98 contacts substrate.

Belongs to the methylglyoxal synthase family.

The enzyme catalyses dihydroxyacetone phosphate = methylglyoxal + phosphate. In terms of biological role, catalyzes the formation of methylglyoxal from dihydroxyacetone phosphate. This Pectobacterium atrosepticum (strain SCRI 1043 / ATCC BAA-672) (Erwinia carotovora subsp. atroseptica) protein is Methylglyoxal synthase.